Consider the following 601-residue polypeptide: Cdc42-interacting protein 4 (601 aa).

The segment at 1–117 is required for podosome formation and interaction with AKAP9 and microtubules; the sequence is MDWGTELWDQ…EMKQERKMHF (117 aa). Residues 1–117 form a required for translocation to the plasma membrane in response to insulin region; that stretch reads MDWGTELWDQ…EMKQERKMHF (117 aa). The 264-residue stretch at 1–264 folds into the F-BAR domain; it reads MDWGTELWDQ…AANAVDPKND (264 aa). Residues 67–259 adopt a coiled-coil conformation; that stretch reads FSQQQSFVQI…EGMKVAANAV (193 aa). 3 disordered regions span residues 280–358, 390–420, and 479–543; these read GDVE…GRDP, DFSH…EVDQ, and RGDS…SPIG. The span at 289-302 shows a compositional bias: polar residues; sequence QPMNRAPSDSSLGT. The segment at 293 to 537 is interaction with CDC42; the sequence is RAPSDSSLGT…TEFDEDFEEE (245 aa). An interaction with PDE6G region spans residues 293–601; the sequence is RAPSDSSLGT…PTSYLRVTLN (309 aa). Residues Ser-296, Ser-298, and Ser-299 each carry the phosphoserine modification. A compositionally biased stretch (basic residues) spans 314–329; that stretch reads GRSRTKRWPFGKKNKP. At Ser-335 the chain carries Phosphoserine. The segment covering 336-346 has biased composition (low complexity); it reads PLGGPVPSALP. At Ser-351 the chain carries Phosphoserine. Positions 388–481 form a coiled coil; that stretch reads TEDFSHLPPE…ESRVLSNRGD (94 aa). Residues 393 to 470 form the REM-1 domain; sequence HLPPEQQRKR…VQKYEAWLAE (78 aa). Residues 407-420 are compositionally biased toward basic and acidic residues; the sequence is LEERSRELQKEVDQ. Positions 471–601 are required for interaction with FASLG and localization to lysosomes; that stretch reads AESRVLSNRG…PTSYLRVTLN (131 aa). Ser-482 is subject to Phosphoserine. The tract at residues 487–541 is interaction with DNM2 and WASL; it reads ARPPDPPASAPPDSSSNSASQDTKESSEEPPSEESQDTPIYTEFDEDFEEEPTSP. Residues 497–506 are compositionally biased toward low complexity; the sequence is PPDSSSNSAS. Residues 529 to 538 show a composition bias toward acidic residues; sequence EFDEDFEEEP. Residues 529 to 601 form an interaction with DNM1 and WASL region; it reads EFDEDFEEEP…PTSYLRVTLN (73 aa). Residues 538-601 are required for podosome formation; the sequence is PTSPIGHCVA…PTSYLRVTLN (64 aa). Residues 540–601 enclose the SH3 domain; it reads SPIGHCVAIY…PTSYLRVTLN (62 aa). An interaction with WAS region spans residues 544–601; that stretch reads HCVAIYHFEGSSEGTISMAEGEDLSLMEEDKGDGWTRVRRKEGGEGYVPTSYLRVTLN. Residues 546–601 are interaction with ARHGAP17, DAAM1, DIAPH1 and DIAPH2; sequence VAIYHFEGSSEGTISMAEGEDLSLMEEDKGDGWTRVRRKEGGEGYVPTSYLRVTLN.

This sequence belongs to the FNBP1 family. In terms of assembly, interacts specifically with GTP-bound RHOQ. Interacts with DNM2 and PDE6G. Homodimerizes, the dimers can polymerize end-to-end to form filamentous structures. Interacts specifically with GTP-bound CDC42. Interacts with AKAP9, ARHGAP17, DAAM1, DIAPH1, DIAPH2, DNM1, FASLG/FASL, GAPVD1, LYN, microtubules, SRC, WAS/WASP and WASL/N-WASP. Interacts with the ligand binding domain of the thyroid receptor (TR) in the presence of thyroid hormone. May interact with CTNNB1 and HD/HTT. In terms of processing, tyrosine phosphorylated. Also phosphorylated by PKA. Expressed in brain, colon, heart, kidney, liver, lung, megakaryocyte, ovary, pancreas, peripheral blood lymphocytes, placenta, prostate, skeletal muscle, small intestine, spleen, testis, thymus and trachea.

Its subcellular location is the cytoplasm. It is found in the cytoskeleton. The protein resides in the cell cortex. The protein localises to the lysosome. It localises to the golgi apparatus. Its subcellular location is the cell membrane. It is found in the cell projection. The protein resides in the phagocytic cup. The protein localises to the perinuclear region. Required for translocation of GLUT4 to the plasma membrane in response to insulin signaling. Required to coordinate membrane tubulation with reorganization of the actin cytoskeleton during endocytosis. Binds to lipids such as phosphatidylinositol 4,5-bisphosphate and phosphatidylserine and promotes membrane invagination and the formation of tubules. Also promotes CDC42-induced actin polymerization by recruiting WASL/N-WASP which in turn activates the Arp2/3 complex. Actin polymerization may promote the fission of membrane tubules to form endocytic vesicles. Required for the formation of podosomes, actin-rich adhesion structures specific to monocyte-derived cells. May be required for the lysosomal retention of FASLG/FASL. The protein is Cdc42-interacting protein 4 (TRIP10) of Homo sapiens (Human).